The chain runs to 449 residues: 3-phosphoshikimate 1-carboxyvinyltransferase (449 aa).

Residues K28, S29, and R33 each coordinate 3-phosphoshikimate. K28 is a binding site for phosphoenolpyruvate. 2 residues coordinate phosphoenolpyruvate: G105 and R133. 3-phosphoshikimate-binding residues include S179, Q181, D332, and K359. Position 181 (Q181) interacts with phosphoenolpyruvate. D332 acts as the Proton acceptor in catalysis. R363 and R406 together coordinate phosphoenolpyruvate.

This sequence belongs to the EPSP synthase family. In terms of assembly, monomer.

It is found in the cytoplasm. It carries out the reaction 3-phosphoshikimate + phosphoenolpyruvate = 5-O-(1-carboxyvinyl)-3-phosphoshikimate + phosphate. The protein operates within metabolic intermediate biosynthesis; chorismate biosynthesis; chorismate from D-erythrose 4-phosphate and phosphoenolpyruvate: step 6/7. In terms of biological role, catalyzes the transfer of the enolpyruvyl moiety of phosphoenolpyruvate (PEP) to the 5-hydroxyl of shikimate-3-phosphate (S3P) to produce enolpyruvyl shikimate-3-phosphate and inorganic phosphate. The protein is 3-phosphoshikimate 1-carboxyvinyltransferase of Nitrobacter winogradskyi (strain ATCC 25391 / DSM 10237 / CIP 104748 / NCIMB 11846 / Nb-255).